The chain runs to 863 residues: Cilia- and flagella-associated protein 58 (863 aa).

2 coiled-coil regions span residues 107–600 and 631–815; these read TVKE…NERD and QSQY…KQVF. A disordered region spans residues 836–863; the sequence is GPSLLDQLPGGSGTGSGGMATGGGVGMS. Residues 845–863 are compositionally biased toward gly residues; sequence GGSGTGSGGMATGGGVGMS.

Belongs to the CFAP58 family.

The protein localises to the cell projection. The protein resides in the cilium. It is found in the flagellum. This Chlamydomonas reinhardtii (Chlamydomonas smithii) protein is Cilia- and flagella-associated protein 58.